A 359-amino-acid chain; its full sequence is Protein mab-21-like 2-A (359 aa).

The protein belongs to the mab-21 family.

It localises to the nucleus. Its subcellular location is the cytoplasm. Its function is as follows. Required for normal development of the eye. May promote dorsalization of the developing embryo by antagonizing the ventralizing factor bmp4. Functional antagonism of bmp4 may require interaction with smad1. Required for gastrulation and subsequent neural development. May function as a transcriptional repressor. The protein is Protein mab-21-like 2-A (mab21l2-a) of Xenopus laevis (African clawed frog).